The following is a 366-amino-acid chain: Peptide chain release factor 2 (366 aa).

At Gln-251 the chain carries N5-methylglutamine.

Belongs to the prokaryotic/mitochondrial release factor family. Post-translationally, methylated by PrmC. Methylation increases the termination efficiency of RF2.

Its subcellular location is the cytoplasm. In terms of biological role, peptide chain release factor 2 directs the termination of translation in response to the peptide chain termination codons UGA and UAA. The sequence is that of Peptide chain release factor 2 from Exiguobacterium sp. (strain ATCC BAA-1283 / AT1b).